Reading from the N-terminus, the 207-residue chain is Protein 6b (207 aa).

Positions 160 to 183 (GNYTEEGEDDDDEMDDEGEAGGAE) are disordered. Over residues 164-178 (EEGEDDDDEMDDEGE) the composition is skewed to acidic residues.

Involved in tumor formation and increases auxin and cytokinin effects in host plants. The chain is Protein 6b (6b) from Agrobacterium tumefaciens (strain Ach5).